We begin with the raw amino-acid sequence, 288 residues long: Centromere protein P (288 aa).

The stretch at 1-71 forms a coiled coil; it reads MDAELAEVRA…HLESELSFLS (71 aa). S38 is subject to Phosphoserine.

Belongs to the CENP-P/CTF19 family. Component of the CENPA-CAD complex, composed of CENPI, CENPK, CENPL, CENPO, CENPP, CENPQ, CENPR and CENPS. The CENPA-CAD complex interacts with the CENPA-NAC complex, at least composed of CENPA, CENPC, CENPH, CENPM, CENPN, CENPT and CENPU.

It localises to the nucleus. The protein resides in the chromosome. The protein localises to the centromere. In terms of biological role, component of the CENPA-CAD (nucleosome distal) complex, a complex recruited to centromeres which is involved in assembly of kinetochore proteins, mitotic progression and chromosome segregation. May be involved in incorporation of newly synthesized CENPA into centromeres via its interaction with the CENPA-NAC complex. The chain is Centromere protein P (CENPP) from Homo sapiens (Human).